A 1744-amino-acid chain; its full sequence is Tensin-1 (1744 aa).

The tract at residues 15 to 55 is disordered; the sequence is SPAVNYELPSPGQSITKQVDTPDATRSPRGGQAHRKASRSM. Positions 58–230 constitute a Phosphatase tensin-type domain; the sequence is TAAMESSCEL…HYFSGLLSGS (173 aa). The region spanning 235-361 is the C2 tensin-type domain; the sequence is NKPLFLHHVI…GKVEFVFSYG (127 aa). Disordered stretches follow at residues 467 to 505, 569 to 589, 666 to 686, 724 to 797, 934 to 956, 982 to 1077, and 1156 to 1437; these read TLSV…SPEE, DELP…SSLD, AQEH…PAWL, PQAP…APSR, GSQQ…QLPH, RVAG…PGLA, and VPSP…GSAV. Polar residues predominate over residues 468–481; it reads LSVSSDSGNSTAST. Residues 580–589 show a composition bias toward low complexity; sequence GSLGTLSSLD. Polar residues predominate over residues 728–753; it reads ARSTSSREAVQRGLNSWQQQGGSRPP. Low complexity predominate over residues 763–773; that stretch reads SHSPSLSSCSP. Residues 774–783 are compositionally biased toward pro residues; it reads QPSPLQPMPP. 2 stretches are compositionally biased toward basic and acidic residues: residues 1004–1014 and 1041–1054; these read TPSDSHYEKSS and RPKE…KEAF. Over residues 1060-1069 the composition is skewed to polar residues; the sequence is ASPSSLTSGG. Composition is skewed to low complexity over residues 1156 to 1169 and 1208 to 1220; these read VPSP…IHSV and SAHS…SPSS. Composition is skewed to polar residues over residues 1344 to 1355, 1370 to 1380, and 1405 to 1420; these read LSRQSSASGYQP, GTSTPHSSSPD, and ERSN…NGKA. The segment covering 1421 to 1435 has biased composition (low complexity); sequence SSPLSSGMSSPSSGS. An SH2 domain is found at 1472–1581; that stretch reads WYKPDISREQ…ALPCKLVIPD (110 aa). The PTB domain occupies 1607 to 1743; the sequence is ACNVLFINSV…SRVMLGSGQK (137 aa).

Belongs to the PTEN phosphatase protein family. Binds to actin filaments. Interacts with phosphotyrosine-containing proteins. Tyrosine phosphorylated. In terms of tissue distribution, heart, gizzard, lung and skeletal muscle.

The protein resides in the cell surface. The protein localises to the cell junction. Its subcellular location is the focal adhesion. It localises to the cytoplasm. It is found in the cytoskeleton. In terms of biological role, may act as a protein phosphatase and/or a lipid phosphatase. Involved in fibrillar adhesion formation. Plays a role in cell polarization and migration. May be involved in cartilage development and in linking signal transduction pathways to the cytoskeleton. This chain is Tensin-1 (TNS1), found in Gallus gallus (Chicken).